A 369-amino-acid polypeptide reads, in one-letter code: UDP-N-acetylglucosamine--N-acetylmuramyl-(pentapeptide) pyrophosphoryl-undecaprenol N-acetylglucosamine transferase (369 aa).

Residues 15–17 (TGG), Asn-126, Arg-169, Ser-197, and Gln-299 each bind UDP-N-acetyl-alpha-D-glucosamine.

It belongs to the glycosyltransferase 28 family. MurG subfamily.

The protein resides in the cell inner membrane. The enzyme catalyses di-trans,octa-cis-undecaprenyl diphospho-N-acetyl-alpha-D-muramoyl-L-alanyl-D-glutamyl-meso-2,6-diaminopimeloyl-D-alanyl-D-alanine + UDP-N-acetyl-alpha-D-glucosamine = di-trans,octa-cis-undecaprenyl diphospho-[N-acetyl-alpha-D-glucosaminyl-(1-&gt;4)]-N-acetyl-alpha-D-muramoyl-L-alanyl-D-glutamyl-meso-2,6-diaminopimeloyl-D-alanyl-D-alanine + UDP + H(+). The protein operates within cell wall biogenesis; peptidoglycan biosynthesis. Functionally, cell wall formation. Catalyzes the transfer of a GlcNAc subunit on undecaprenyl-pyrophosphoryl-MurNAc-pentapeptide (lipid intermediate I) to form undecaprenyl-pyrophosphoryl-MurNAc-(pentapeptide)GlcNAc (lipid intermediate II). This chain is UDP-N-acetylglucosamine--N-acetylmuramyl-(pentapeptide) pyrophosphoryl-undecaprenol N-acetylglucosamine transferase, found in Methylobacterium radiotolerans (strain ATCC 27329 / DSM 1819 / JCM 2831 / NBRC 15690 / NCIMB 10815 / 0-1).